Consider the following 546-residue polypeptide: T-complex protein 1 subunit epsilon (546 aa).

Belongs to the TCP-1 chaperonin family. As to quaternary structure, heterooligomeric complex of about 850 to 900 kDa that forms two stacked rings, 12 to 16 nm in diameter.

It localises to the cytoplasm. Functionally, molecular chaperone; assists the folding of proteins upon ATP hydrolysis. Known to play a role, in vitro, in the folding of actin and tubulin. The chain is T-complex protein 1 subunit epsilon (cct5) from Schizosaccharomyces pombe (strain 972 / ATCC 24843) (Fission yeast).